The chain runs to 237 residues: Cyclic-di-GMP-binding biofilm dispersal mediator protein (237 aa).

Residue 10–34 coordinates NAD(+); the sequence is LILGGSRGIGAAIVRRFVTDGANVR. Residue S132 participates in substrate binding. Y146 (proton acceptor) is an active-site residue.

Belongs to the short-chain dehydrogenases/reductases (SDR) family.

Functionally, increases biofilm dispersal. Acts by binding directly to the signaling molecule cyclic-di-GMP, which decreases the intracellular concentration of cyclic-di-GMP and leads to biofilm dispersal. Also controls other biofilm-related phenotypes such as cell motility, cell size, cell aggregation and production of extracellular DNA and extracellular polysaccharides (EPS). Does not act as a phosphodiesterase. The sequence is that of Cyclic-di-GMP-binding biofilm dispersal mediator protein (bdcA) from Escherichia coli (strain K12).